A 623-amino-acid chain; its full sequence is MLMSFILLISTSMILISVFSYVLIALIVLGIVLSLISLLSPRVSYVSSVYLIGLTVYLNPGFSLTQSLINTVPILGEINMLSGLLKTPVTSIISSLFSLALLNLGIKGYEIYLSKHADIVKLDSIIFSQHGLPKQANWNIVVNSEVKLLKSNEKLILSNTPEAKYELCPTLVDHKYYVPNKVTGLAFEGEVIRINYSPVDGVPYEKFRNCFTVFEVEGLPPDTSFVIEINGASLKLKDRKFAKLSLEPLYWKVNEIRISREDEEEIYEPDIKEGLTFRGGTVKINFRRKVIRYKTAKIPSIENWDPGIWVGQEVYGYRVIEVIGLGGNGYVMKVEKNGLLYAMKVLSVNKFTNSLEHFDNLLKESENLEKLSKDPRLVSIYGSFVDKNNIQSALAGDYTSYYKYPPAIIMEFMEGGTLFDLISRVDLVQSKYWQYIVKLVIKEIAKALTFLHKRGYVHLDVKPQNIFLKEKINGEPEVVYKILSSTPGIIKLGDLGSAVRVGEKITQATPAYSPPEQIEAVITGKGAQPSMDNYALGVTLYKLLTMKNLDYVNYLDKAFDEYIKGDPSIAMKYINMAKMSMVNFKPKLPHNTLPELANVVQGTLVVDPKRRLTSYDIVKILEG.

The next 2 membrane-spanning stretches (helical) occupy residues 13–33 (MILISVFSYVLIALIVLGIVL) and 49–69 (VYLIGLTVYLNPGFSLTQSLI). The Protein kinase domain maps to 317–623 (YRVIEVIGLG…SYDIVKILEG (307 aa)). ATP-binding positions include 323 to 331 (IGLGGNGYV) and Lys-344. Residue Asp-460 is the Proton acceptor of the active site.

It belongs to the protein kinase superfamily. Ser/Thr protein kinase family. Post-translationally, autophosphorylated.

It localises to the cell membrane. The enzyme catalyses L-seryl-[protein] + ATP = O-phospho-L-seryl-[protein] + ADP + H(+). It catalyses the reaction L-threonyl-[protein] + ATP = O-phospho-L-threonyl-[protein] + ADP + H(+). With respect to regulation, autophosphorylation is stimulated by Mn(2+). Functionally, plays an essential role in the controlled expression of archaellum components during starvation-induced motility. May inhibit arnR transcription and promote ArnR translation. This Sulfolobus acidocaldarius (strain ATCC 33909 / DSM 639 / JCM 8929 / NBRC 15157 / NCIMB 11770) protein is Serine/threonine-protein kinase ArnS.